The following is a 166-amino-acid chain: Phosphopantetheine adenylyltransferase (166 aa).

Thr10 serves as a coordination point for substrate. Residues 10–11 (TF) and His18 contribute to the ATP site. Positions 42, 75, and 89 each coordinate substrate. ATP is bound by residues 90–92 (GVR), Glu100, and 125–131 (YTYVAST).

Belongs to the bacterial CoaD family. Homohexamer. The cofactor is Mg(2+).

It localises to the cytoplasm. The catalysed reaction is (R)-4'-phosphopantetheine + ATP + H(+) = 3'-dephospho-CoA + diphosphate. It functions in the pathway cofactor biosynthesis; coenzyme A biosynthesis; CoA from (R)-pantothenate: step 4/5. In terms of biological role, reversibly transfers an adenylyl group from ATP to 4'-phosphopantetheine, yielding dephospho-CoA (dPCoA) and pyrophosphate. The protein is Phosphopantetheine adenylyltransferase of Chlorobaculum parvum (strain DSM 263 / NCIMB 8327) (Chlorobium vibrioforme subsp. thiosulfatophilum).